A 157-amino-acid chain; its full sequence is SsrA-binding protein (157 aa).

The protein belongs to the SmpB family.

The protein resides in the cytoplasm. Required for rescue of stalled ribosomes mediated by trans-translation. Binds to transfer-messenger RNA (tmRNA), required for stable association of tmRNA with ribosomes. tmRNA and SmpB together mimic tRNA shape, replacing the anticodon stem-loop with SmpB. tmRNA is encoded by the ssrA gene; the 2 termini fold to resemble tRNA(Ala) and it encodes a 'tag peptide', a short internal open reading frame. During trans-translation Ala-aminoacylated tmRNA acts like a tRNA, entering the A-site of stalled ribosomes, displacing the stalled mRNA. The ribosome then switches to translate the ORF on the tmRNA; the nascent peptide is terminated with the 'tag peptide' encoded by the tmRNA and targeted for degradation. The ribosome is freed to recommence translation, which seems to be the essential function of trans-translation. The sequence is that of SsrA-binding protein from Elusimicrobium minutum (strain Pei191).